Consider the following 281-residue polypeptide: MKTNDNYIEEVTAKVLTSGKYSTLYPPTVRRVTERLFDRYPPKQLEKEVRKKLHQAYGAYIGGIDGKRLEKKIEKIIHEIPNPTTDEATRTEWEKEICLKILNLHTSTNERTVAYDELYQKIFEVTGVPTSITDAGCALNPFSFPFFTEAGMLGQYIGFDLDKGMIEAIEHSLRTLNAPEGIVVKQGDILSDPSGESDLLLMFKLYTLLDRQEEASGLKILQEWKYKNAVISFPIKTISGRDVGMEENYTVKFENDLVGSDLRIMQKLKLGNEMYFIVSRL.

Residues Tyr-60, 105–107 (HTS), Arg-111, Gly-136, Asp-160, 186–187 (QG), Phe-203, and Gln-212 each bind S-adenosyl-L-methionine.

This sequence belongs to the methyltransferase superfamily. Aminoglycoside resistance family.

The catalysed reaction is guanosine(1405) in 16S rRNA + S-adenosyl-L-methionine = N(7)-methylguanosine(1405) in 16S rRNA + S-adenosyl-L-homocysteine. In terms of biological role, specifically methylates the N(7) position of guanine 1405 in 16S rRNA. Confers resistance to various aminoglycosides, including gentamicin and kanamycin. The polypeptide is 16S rRNA (guanine(1405)-N(7))-methyltransferase (rmtC) (Proteus mirabilis).